The chain runs to 459 residues: ADP-specific phosphofructokinase (459 aa).

Positions methionine 1–arginine 457 constitute an ADPK domain. Residues glutamate 268, glutamate 298, and aspartate 441 each coordinate Mg(2+). Aspartate 441 (proton acceptor) is an active-site residue.

Belongs to the carbohydrate kinase PfkC family. Requires Mg(2+) as cofactor.

The protein resides in the cytoplasm. It catalyses the reaction beta-D-fructose 6-phosphate + ADP = beta-D-fructose 1,6-bisphosphate + AMP + H(+). Its pathway is carbohydrate degradation; glycolysis. Catalyzes the phosphorylation of fructose 6-phosphate to fructose 1,6-bisphosphate using ADP as the phosphate donor. The chain is ADP-specific phosphofructokinase from Thermococcus litoralis.